Here is a 300-residue protein sequence, read N- to C-terminus: 1D-myo-inositol 2-acetamido-2-deoxy-alpha-D-glucopyranoside deacetylase (300 aa).

Zn(2+) is bound by residues histidine 13, aspartate 16, and histidine 147.

Belongs to the MshB deacetylase family. The cofactor is Zn(2+).

It carries out the reaction 1D-myo-inositol 2-acetamido-2-deoxy-alpha-D-glucopyranoside + H2O = 1D-myo-inositol 2-amino-2-deoxy-alpha-D-glucopyranoside + acetate. Catalyzes the deacetylation of 1D-myo-inositol 2-acetamido-2-deoxy-alpha-D-glucopyranoside (GlcNAc-Ins) in the mycothiol biosynthesis pathway. This chain is 1D-myo-inositol 2-acetamido-2-deoxy-alpha-D-glucopyranoside deacetylase, found in Mycobacterium avium (strain 104).